A 281-amino-acid chain; its full sequence is 4-diphosphocytidyl-2-C-methyl-D-erythritol kinase (281 aa).

The active site involves Lys-15. 98–108 (PTGAGLGGGSS) is a binding site for ATP. Residue Asp-140 is part of the active site.

This sequence belongs to the GHMP kinase family. IspE subfamily.

The catalysed reaction is 4-CDP-2-C-methyl-D-erythritol + ATP = 4-CDP-2-C-methyl-D-erythritol 2-phosphate + ADP + H(+). It functions in the pathway isoprenoid biosynthesis; isopentenyl diphosphate biosynthesis via DXP pathway; isopentenyl diphosphate from 1-deoxy-D-xylulose 5-phosphate: step 3/6. Functionally, catalyzes the phosphorylation of the position 2 hydroxy group of 4-diphosphocytidyl-2C-methyl-D-erythritol. The protein is 4-diphosphocytidyl-2-C-methyl-D-erythritol kinase of Neisseria meningitidis serogroup C (strain 053442).